Reading from the N-terminus, the 68-residue chain is Large ribosomal subunit protein bL35 (68 aa).

It belongs to the bacterial ribosomal protein bL35 family.

The protein is Large ribosomal subunit protein bL35 of Onion yellows phytoplasma (strain OY-M).